The primary structure comprises 328 residues: dITP/XTP pyrophosphatase (328 aa).

Positions 1 to 129 (MSEKIYEYKD…ATSEQGFGDT (129 aa)) are unknown. Residues 130-324 (ILIATRNEGK…KLMEVFPAWQ (195 aa)) are NTP pyrophosphatase. Substrate is bound at residue 134–139 (TRNEGK). The active-site Proton acceptor is the Asp-196. Asp-196 contributes to the Mg(2+) binding site. Substrate contacts are provided by residues Ser-197, 280-283 (FGYD), Lys-303, and 308-309 (HR).

It belongs to the HAM1 NTPase family. In terms of assembly, homodimer. Requires Mg(2+) as cofactor.

The catalysed reaction is XTP + H2O = XMP + diphosphate + H(+). It carries out the reaction dITP + H2O = dIMP + diphosphate + H(+). It catalyses the reaction ITP + H2O = IMP + diphosphate + H(+). Pyrophosphatase that catalyzes the hydrolysis of nucleoside triphosphates to their monophosphate derivatives, with a high preference for the non-canonical purine nucleotides XTP (xanthosine triphosphate), dITP (deoxyinosine triphosphate) and ITP. Seems to function as a house-cleaning enzyme that removes non-canonical purine nucleotides from the nucleotide pool, thus preventing their incorporation into DNA/RNA and avoiding chromosomal lesions. The sequence is that of dITP/XTP pyrophosphatase from Streptococcus pyogenes serotype M6 (strain ATCC BAA-946 / MGAS10394).